Reading from the N-terminus, the 475-residue chain is Aspartyl/glutamyl-tRNA(Asn/Gln) amidotransferase subunit B (475 aa).

This sequence belongs to the GatB/GatE family. GatB subfamily. As to quaternary structure, heterotrimer of A, B and C subunits.

It catalyses the reaction L-glutamyl-tRNA(Gln) + L-glutamine + ATP + H2O = L-glutaminyl-tRNA(Gln) + L-glutamate + ADP + phosphate + H(+). The catalysed reaction is L-aspartyl-tRNA(Asn) + L-glutamine + ATP + H2O = L-asparaginyl-tRNA(Asn) + L-glutamate + ADP + phosphate + 2 H(+). In terms of biological role, allows the formation of correctly charged Asn-tRNA(Asn) or Gln-tRNA(Gln) through the transamidation of misacylated Asp-tRNA(Asn) or Glu-tRNA(Gln) in organisms which lack either or both of asparaginyl-tRNA or glutaminyl-tRNA synthetases. The reaction takes place in the presence of glutamine and ATP through an activated phospho-Asp-tRNA(Asn) or phospho-Glu-tRNA(Gln). This Bacillus cereus (strain ZK / E33L) protein is Aspartyl/glutamyl-tRNA(Asn/Gln) amidotransferase subunit B.